A 468-amino-acid chain; its full sequence is ATP synthase subunit beta (468 aa).

Position 155–162 (155–162 (GGAGVGKT)) interacts with ATP.

Belongs to the ATPase alpha/beta chains family. F-type ATPases have 2 components, CF(1) - the catalytic core - and CF(0) - the membrane proton channel. CF(1) has five subunits: alpha(3), beta(3), gamma(1), delta(1), epsilon(1). CF(0) has three main subunits: a(1), b(2) and c(9-12). The alpha and beta chains form an alternating ring which encloses part of the gamma chain. CF(1) is attached to CF(0) by a central stalk formed by the gamma and epsilon chains, while a peripheral stalk is formed by the delta and b chains.

The protein localises to the cell membrane. The catalysed reaction is ATP + H2O + 4 H(+)(in) = ADP + phosphate + 5 H(+)(out). In terms of biological role, produces ATP from ADP in the presence of a proton gradient across the membrane. The catalytic sites are hosted primarily by the beta subunits. This is ATP synthase subunit beta from Streptococcus pyogenes serotype M3 (strain ATCC BAA-595 / MGAS315).